We begin with the raw amino-acid sequence, 692 residues long: Centrosomal protein of 83 kDa (692 aa).

Coiled coils occupy residues 32–625 (RCEH…SLIL) and 656–689 (HLQEEQHQRELSLLRKRLEELETTQRKQLEELGS). Ser-689 carries the post-translational modification Phosphoserine.

This sequence belongs to the CEP83 family. In terms of assembly, interacts with CEP164 and IFT20.

It localises to the cytoplasm. Its subcellular location is the cytoskeleton. It is found in the microtubule organizing center. The protein localises to the centrosome. The protein resides in the centriole. In terms of biological role, component of the distal appendage region of the centriole involved in the initiation of primary cilium assembly. May collaborate with IFT20 in the trafficking of ciliary membrane proteins from the Golgi complex to the cilium during the initiation of primary cilium assembly. The sequence is that of Centrosomal protein of 83 kDa (Cep83) from Mus musculus (Mouse).